We begin with the raw amino-acid sequence, 185 residues long: uncharacterized protein (185 aa).

Helical transmembrane passes span Thr4–Ile24, Leu54–Ile74, Leu98–Asn118, Val119–Tyr139, and Phe153–Ile173.

It is found in the cell membrane. This is an uncharacterized protein from Bacillus subtilis (strain 168).